Reading from the N-terminus, the 90-residue chain is Nodulation protein NolS (90 aa).

In terms of biological role, involved in nodulation of a particular host, M.lupulina. In Sinorhizobium meliloti (strain Sm2011 / Rm2011 / 2011), this protein is Nodulation protein NolS (nolS).